Reading from the N-terminus, the 440-residue chain is Coenzyme A disulfide reductase (440 aa).

8-33 (GAVAGGATCASQIRRLDKDSEITIFE) lines the FAD pocket. Substrate is bound by residues T15, Q19, R22, S39, and N42. C43 functions as the Nucleophile in the catalytic mechanism. The active-site Redox-active is C43. K71 provides a ligand contact to substrate. Position 151–166 (151–166 (ALVVGAGYISLEVLEN)) interacts with NADP(+). 267 to 277 (TNIPNIYALGD) lines the FAD pocket. H299 serves as a coordination point for substrate. Y419 provides a ligand contact to FAD. A substrate-binding site is contributed by K427.

It belongs to the class-III pyridine nucleotide-disulfide oxidoreductase family. As to quaternary structure, homodimer. The cofactor is FAD.

It carries out the reaction NADP(+) + 2 CoA = CoA-disulfide + NADPH + H(+). Functionally, catalyzes specifically the NADPH-dependent reduction of coenzyme A disulfide. The chain is Coenzyme A disulfide reductase from Staphylococcus haemolyticus (strain JCSC1435).